We begin with the raw amino-acid sequence, 573 residues long: Poly(ribitol-phosphate) beta-N-acetylglucosaminyltransferase TarS (573 aa).

Residues Pro9, Asp41, Asn68, Arg76, 92–94 (DSD), Arg127, and Glu178 contribute to the UDP-N-acetyl-alpha-D-glucosamine site. A Mn(2+)-binding site is contributed by Asp94. The active-site Proton acceptor is Asp179. UDP-N-acetyl-alpha-D-glucosamine contacts are provided by residues Arg207 and 211-213 (HMS).

It belongs to the glycosyltransferase 2 family. In terms of assembly, homotrimer. Requires Mn(2+) as cofactor.

It carries out the reaction 4-O-[(D-ribitylphospho)(n)-di{(2R)-glycerylphospho}]-N-acetyl-beta-D-mannosaminyl-(1-&gt;4)-N-acetyl-alpha-D-glucosaminyl di-trans,octa-cis-undecaprenyl diphosphate + n UDP-N-acetyl-alpha-D-glucosamine = 4-O-([2-N-acetyl-beta-D-glucosaminyl-1-D-ribitylphospho](n)-di{[2R]-1-glycerylphospho})-N-acetyl-beta-D-mannosaminyl-(1-&gt;4)-N-acetyl-alpha-D-glucosaminyl di-trans,octa-cis-undecaprenyl diphosphate + n UDP + n H(+). It functions in the pathway cell wall biogenesis; poly(ribitol phosphate) teichoic acid biosynthesis. Attaches beta-O-GlcNAc (beta-O-N-acetyl-D-glucosamine) residues to the C4 position of poly(RboP)-wall teichoic acids (WTAs). Prefers UDP-GlcNAc as a donor substrate and is specific for poly(ribitol phosphate) WTAs. Can also use UDP-Glc and UDP-GalNAc, but not UDP-galactose or UDP-glucuronic acid. Mediates beta-lactam resistance in methicillin resistant Staphylococcus aureus (MRSA) strains. The sequence is that of Poly(ribitol-phosphate) beta-N-acetylglucosaminyltransferase TarS from Staphylococcus aureus (strain MW2).